A 314-amino-acid chain; its full sequence is Polyamine aminopropyltransferase (314 aa).

The PABS domain occupies 4–241 (GMYFFEHVTP…LNFGFLLASD (238 aa)). Q33 provides a ligand contact to S-methyl-5'-thioadenosine. Positions 64 and 88 each coordinate spermidine. S-methyl-5'-thioadenosine contacts are provided by residues D108 and 140–141 (DA). D158 (proton acceptor) is an active-site residue. P168 contributes to the S-methyl-5'-thioadenosine binding site.

Belongs to the spermidine/spermine synthase family. In terms of assembly, homodimer or homotetramer.

It is found in the cytoplasm. The enzyme catalyses S-adenosyl 3-(methylsulfanyl)propylamine + putrescine = S-methyl-5'-thioadenosine + spermidine + H(+). It participates in amine and polyamine biosynthesis; spermidine biosynthesis; spermidine from putrescine: step 1/1. Catalyzes the irreversible transfer of a propylamine group from the amino donor S-adenosylmethioninamine (decarboxy-AdoMet) to putrescine (1,4-diaminobutane) to yield spermidine. This is Polyamine aminopropyltransferase from Thermus thermophilus (strain ATCC BAA-163 / DSM 7039 / HB27).